The chain runs to 400 residues: Selection and upkeep of intraepithelial T-cells protein 2 (400 aa).

The first 21 residues, 1-21, serve as a signal peptide directing secretion; sequence MGATGVLLCVVLHFLQMVTQS. Residues 22 to 240 lie on the Extracellular side of the membrane; the sequence is SEKFTVTGLQ…LSGELFSWKR (219 aa). An Ig-like V-type domain is found at 23 to 133; the sequence is EKFTVTGLQR…VGEFYEEHIT (111 aa). 2 cysteine pairs are disulfide-bonded: Cys-46/Cys-120 and Cys-160/Cys-214. In terms of domain architecture, Ig-like C1-type spans 139-225; that stretch reads ATSSVMYILM…LQNLLTHQEE (87 aa). N-linked (GlcNAc...) asparagine glycosylation occurs at Asn-197. The helical transmembrane segment at 241–261 threads the bilayer; sequence VWIMILTTIGFMMIAFCMTYC. Topologically, residues 262 to 280 are cytoplasmic; sequence VQQHLLYGTFSKGKCHWLK. A helical transmembrane segment spans residues 281–301; that stretch reads STMIFMFSVIAVTGVMLILHL. Over 302-321 the chain is Extracellular; it reads KQRVPVSDQHFELDTLWLED. Residues 322-342 form a helical membrane-spanning segment; it reads ISVILCVLIVFIIKLISFIYF. Residues 343 to 400 lie on the Cytoplasmic side of the membrane; that stretch reads RLEGDHQGWSLPPYLSATPTAAICRLAVPEYSRGHLQLDSEDDLAGMGPSPFFITPCF.

This sequence belongs to the SKINT family. In terms of tissue distribution, expressed in skin, thymus and mammary gland.

Its subcellular location is the membrane. Functionally, may act by engaging a cell surface molecule on immature T-cells in the embryonic thymus. The sequence is that of Selection and upkeep of intraepithelial T-cells protein 2 (Skint2) from Mus musculus (Mouse).